The primary structure comprises 671 residues: UvrABC system protein B (671 aa).

Residues 25–412 enclose the Helicase ATP-binding domain; the sequence is EGIEAGLSHQ…AGRVVEQVVR (388 aa). 38-45 provides a ligand contact to ATP; it reads GVTGSGKT. A Beta-hairpin motif is present at residues 91-114; that stretch reads YYDYYQPEAYVPSSDTFIEKDASI. The Helicase C-terminal domain maps to 429-582; the sequence is QVDDLLSEIR…QIAFNEANGI (154 aa). In terms of domain architecture, UVR spans 632 to 667; the sequence is TKRIKQLEEKMMQFARDLEFEAAAQLRDEIAQLRER.

It belongs to the UvrB family. In terms of assembly, forms a heterotetramer with UvrA during the search for lesions. Interacts with UvrC in an incision complex.

The protein resides in the cytoplasm. Its function is as follows. The UvrABC repair system catalyzes the recognition and processing of DNA lesions. A damage recognition complex composed of 2 UvrA and 2 UvrB subunits scans DNA for abnormalities. Upon binding of the UvrA(2)B(2) complex to a putative damaged site, the DNA wraps around one UvrB monomer. DNA wrap is dependent on ATP binding by UvrB and probably causes local melting of the DNA helix, facilitating insertion of UvrB beta-hairpin between the DNA strands. Then UvrB probes one DNA strand for the presence of a lesion. If a lesion is found the UvrA subunits dissociate and the UvrB-DNA preincision complex is formed. This complex is subsequently bound by UvrC and the second UvrB is released. If no lesion is found, the DNA wraps around the other UvrB subunit that will check the other stand for damage. This Pseudomonas putida (strain ATCC 47054 / DSM 6125 / CFBP 8728 / NCIMB 11950 / KT2440) protein is UvrABC system protein B.